The sequence spans 1061 residues: E3 SUMO-protein ligase ZNF451 (1061 aa).

Residues 1 to 38 (MGDPGSEIIESVPPAGPEASESTTDENEDDIQFVSEGP) are disordered. Positions 1–246 (MGDPGSEIIE…TDDGHNNNLL (246 aa)) are sufficient for E3 SUMO-protein ligase activity. Positions 1–344 (MGDPGSEIIE…RVHCRNAGPV (344 aa)) are important for interaction with SUMO1 and SUMO2. An interaction with SUMO2 1 region spans residues 30 to 37 (DIQFVSEG). The PLRP motif lies at 38–41 (PLRP). An interaction with SUMO2 2 region spans residues 42 to 50 (VLEYIDLVS). Residues K75, K77, K106, I121, A130, L138, K139, K144, and K153 each participate in a glycyl lysine isopeptide (Lys-Gly) (interchain with G-Cter in SUMO2) cross-link. At S155 the chain carries Phosphoserine. R158 is modified (omega-N-methylarginine). Residues V164 and K167 each participate in a glycyl lysine isopeptide (Lys-Gly) (interchain with G-Cter in SUMO2) cross-link. Residues 168-525 (PILCPIMHCN…HMSRIHGGAH (358 aa)) are important for interaction with SMAD4. The segment at 169–195 (ILCPIMHCNKEFDNGHLLLGHLKRFDH) adopts a C2H2-type 1 zinc-finger fold. Glycyl lysine isopeptide (Lys-Gly) (interchain with G-Cter in SUMO2) cross-links involve residues Q226, G240, P247, S263, K270, K275, K283, D286, K288, P293, K301, and K309. A C2H2-type 2 zinc finger spans residues 253–277 (FACPNCFLLFSRKEECSKHMSGKNH). The segment at 315–337 (VKCVACHKTLRSHMELTAHFRVH) adopts a C2H2-type 3 zinc-finger fold. K357 is covalently cross-linked (Glycyl lysine isopeptide (Lys-Gly) (interchain with G-Cter in SUMO2)). The C2H2-type 4 zinc finger occupies 362–386 (GYCPDCNQVFVDETSTQNHKQNSGH). K423 is covalently cross-linked (Glycyl lysine isopeptide (Lys-Gly) (interchain with G-Cter in SUMO2)). Position 432 is a phosphoserine (S432). Glycyl lysine isopeptide (Lys-Gly) (interchain with G-Cter in SUMO2) cross-links involve residues K434, K446, K452, K454, K464, F473, V490, C500, K505, D508, G522, W532, K543, and K585. The segment at 498-521 (YKCVVCGKVCDDSGVIRLHMSRIH) adopts a C2H2-type 5 zinc-finger fold. The segment at 531–554 (FWCRTCKKELTRKDTIMAHVTEFH) adopts a C2H2-type 6 zinc-finger fold. A C2H2-type 7; atypical zinc finger spans residues 606 to 631 (WQCRICEDMFDSQEYVKQHCMSLASH). Glycyl lysine isopeptide (Lys-Gly) (interchain with G-Cter in SUMO2) cross-links involve residues K632, K647, and K664. The C2H2-type 8 zinc-finger motif lies at 636–659 (YSCAHCRKPFHKIETLYRHCQDEH). A C2H2-type 9 zinc finger spans residues 667 to 690 (YFCGLCDLIFNVEEAFLSHYEEHH). Residue K706 forms a Glycyl lysine isopeptide (Lys-Gly) (interchain with G-Cter in SUMO1); alternate linkage. K706 participates in a covalent cross-link: Glycyl lysine isopeptide (Lys-Gly) (interchain with G-Cter in SUMO2); alternate. Residues K731 and K748 each participate in a glycyl lysine isopeptide (Lys-Gly) (interchain with G-Cter in SUMO2) cross-link. The segment at 753 to 776 (FRCSLCSATAQNLTDMNTHIHQVH) adopts a C2H2-type 10 zinc-finger fold. Glycyl lysine isopeptide (Lys-Gly) (interchain with G-Cter in SUMO2) cross-links involve residues K777, K779, K790, K817, K827, K832, K843, K845, K852, K951, K992, and K993. The segment at 789-812 (IKCGTCTKAFHDPESAQQHFHRKH) adopts a C2H2-type 11 zinc-finger fold. An important for ubiquitin binding region spans residues 1050-1061 (LEEAIRRSLEEM).

Belongs to the krueppel C2H2-type zinc-finger protein family. Homooligomer. Interacts (via N-terminal region) with SUMO1. Interacts (via N-terminal region) with SUMO2. Interacts simultaneously with two SUMO2 chains. Identified in a complex with SUMO2 and UBE2I/UBC9, where one ZNF451 interacts with one UBE2I/UBC9 and two SUMO2 chains, one bound to the UBE2I/UBC9 active site and the other to another region of the same UBE2I/UBC9 molecule. Interacts (via C-terminus) with ubiquitin. Interacts (via N-terminal zinc-finger domains) with SMAD4 (via MH2 domain). Interacts with SMAD2 and SMAD3. Identified in a complex that contains at least ZNF451, SMAD2, SMAD3 and SMAD4. Interacts with EP300. Inhibits interaction between EP300 and the SMAD4 complex. Interacts with SIMC1. Sumoylated. Predominantly sumoylated on the N-terminal region that is important for interaction with SUMO1 and SUMO2. Sumoylation is important for localization in nuclear granules; desumoylation leads to diffuse nucleoplasmic location. Autosumoylated (in vitro). Sumoylation enhances E3 SUMO-protein ligase activity.

The protein localises to the nucleus. It is found in the PML body. The protein resides in the nucleoplasm. It functions in the pathway protein modification; protein sumoylation. In terms of biological role, E3 SUMO-protein ligase; has a preference for SUMO2 and SUMO3 and facilitates UBE2I/UBC9-mediated sumoylation of target proteins. Plays a role in protein SUMO2 modification in response to stress caused by DNA damage and by proteasome inhibitors (in vitro). Required for MCM4 sumoylation. Has no activity with SUMO1. Preferentially transfers an additional SUMO2 chain onto the SUMO2 consensus site 'Lys-11'. Negatively regulates transcriptional activation mediated by the SMAD4 complex in response to TGF-beta signaling. Inhibits EP300-mediated acetylation of histone H3 at 'Lys-9'. Plays a role in regulating the transcription of AR targets. The sequence is that of E3 SUMO-protein ligase ZNF451 (ZNF451) from Homo sapiens (Human).